The sequence spans 247 residues: MNEKIAILSAYSFVNIEEPANLIPKLLLIGKRKYVRGTILLANEGFNGSFSGSYENVNLVLEELIKLTGPKDVNVKINYSDVHPFQKLKVRLKKEIVAMNVDDLNVDLFKGEYIEPKDWDEFITKQDVIVIDTRNDYEVEVGTFKSAINPNTKTFKQFPAWVQQNQELLKGKKIAMVCTGGIRCEKSTSLLKSIGYDEVYHLKGGILQYLEDTQNKNNLWQGECFVFDDRRAVTDDLSPVERHWLQR.

Residues 124-218 (TKQDVIVIDT…YLEDTQNKNN (95 aa)) enclose the Rhodanese domain. The active-site Cysteine persulfide intermediate is Cys-178.

It belongs to the TrhO family.

The catalysed reaction is uridine(34) in tRNA + AH2 + O2 = 5-hydroxyuridine(34) in tRNA + A + H2O. Its function is as follows. Catalyzes oxygen-dependent 5-hydroxyuridine (ho5U) modification at position 34 in tRNAs. This chain is tRNA uridine(34) hydroxylase, found in Rickettsia massiliae (strain Mtu5).